Here is a 770-residue protein sequence, read N- to C-terminus: Capsid protein (770 aa).

Positions 647–656 (MQQQPTTTDI) are enriched in polar residues. Disordered stretches follow at residues 647 to 678 (MQQQ…QEGE) and 697 to 717 (WEDS…TQTV). Residues 666-678 (RDTEVYHSSQEGE) show a composition bias toward basic and acidic residues. Residues 703–717 (EESGSQSSEEETQTV) are compositionally biased toward low complexity.

It belongs to the anelloviridae capsid protein family.

It localises to the virion. Functionally, self assemble to form an icosahedral capsid. In Torque teno virus (isolate Human/Japan/TRM1/1999) (TTV), this protein is Capsid protein.